A 322-amino-acid chain; its full sequence is Putative DNA-directed RNA polymerase subunit alpha-like 2 (322 aa).

Residues M1 to E232 form an alpha N-terminal domain (alpha-NTD) region. The tract at residues E280–F322 is alpha C-terminal domain (alpha-CTD).

This sequence belongs to the RNA polymerase alpha chain family. In terms of assembly, in plastids the minimal PEP RNA polymerase catalytic core is composed of four subunits: alpha, beta, beta', and beta''. When a (nuclear-encoded) sigma factor is associated with the core the holoenzyme is formed, which can initiate transcription.

It localises to the plastid. The protein resides in the chloroplast. The enzyme catalyses RNA(n) + a ribonucleoside 5'-triphosphate = RNA(n+1) + diphosphate. DNA-dependent RNA polymerase catalyzes the transcription of DNA into RNA using the four ribonucleoside triphosphates as substrates. The protein is Putative DNA-directed RNA polymerase subunit alpha-like 2 (rpoAL2-A) of Pelargonium hortorum (Common geranium).